Reading from the N-terminus, the 294-residue chain is Phosphatidylserine decarboxylase proenzyme (294 aa).

Catalysis depends on charge relay system; for autoendoproteolytic cleavage activity residues Asp-100, His-157, and Ser-261. Residue Ser-261 is the Schiff-base intermediate with substrate; via pyruvic acid; for decarboxylase activity of the active site. A Pyruvic acid (Ser); by autocatalysis modification is found at Ser-261.

It belongs to the phosphatidylserine decarboxylase family. PSD-B subfamily. Prokaryotic type I sub-subfamily. Heterodimer of a large membrane-associated beta subunit and a small pyruvoyl-containing alpha subunit. The cofactor is pyruvate. Post-translationally, is synthesized initially as an inactive proenzyme. Formation of the active enzyme involves a self-maturation process in which the active site pyruvoyl group is generated from an internal serine residue via an autocatalytic post-translational modification. Two non-identical subunits are generated from the proenzyme in this reaction, and the pyruvate is formed at the N-terminus of the alpha chain, which is derived from the carboxyl end of the proenzyme. The autoendoproteolytic cleavage occurs by a canonical serine protease mechanism, in which the side chain hydroxyl group of the serine supplies its oxygen atom to form the C-terminus of the beta chain, while the remainder of the serine residue undergoes an oxidative deamination to produce ammonia and the pyruvoyl prosthetic group on the alpha chain. During this reaction, the Ser that is part of the protease active site of the proenzyme becomes the pyruvoyl prosthetic group, which constitutes an essential element of the active site of the mature decarboxylase.

The protein resides in the cell membrane. It catalyses the reaction a 1,2-diacyl-sn-glycero-3-phospho-L-serine + H(+) = a 1,2-diacyl-sn-glycero-3-phosphoethanolamine + CO2. The protein operates within phospholipid metabolism; phosphatidylethanolamine biosynthesis; phosphatidylethanolamine from CDP-diacylglycerol: step 2/2. Its function is as follows. Catalyzes the formation of phosphatidylethanolamine (PtdEtn) from phosphatidylserine (PtdSer). The protein is Phosphatidylserine decarboxylase proenzyme of Histophilus somni (strain 129Pt) (Haemophilus somnus).